Here is a 388-residue protein sequence, read N- to C-terminus: Succinate--CoA ligase [ADP-forming] subunit beta (388 aa).

One can recognise an ATP-grasp domain in the interval 9–244 (KQLFAEYGLP…PSQDDPREAH (236 aa)). ATP is bound by residues Lys46, 53 to 55 (GRG), Glu99, Thr102, and Glu107. 2 residues coordinate Mg(2+): Asn199 and Asp213. Substrate contacts are provided by residues Asn264 and 321–323 (GIV).

The protein belongs to the succinate/malate CoA ligase beta subunit family. As to quaternary structure, heterotetramer of two alpha and two beta subunits. Mg(2+) serves as cofactor.

The enzyme catalyses succinate + ATP + CoA = succinyl-CoA + ADP + phosphate. The catalysed reaction is GTP + succinate + CoA = succinyl-CoA + GDP + phosphate. The protein operates within carbohydrate metabolism; tricarboxylic acid cycle; succinate from succinyl-CoA (ligase route): step 1/1. Functionally, succinyl-CoA synthetase functions in the citric acid cycle (TCA), coupling the hydrolysis of succinyl-CoA to the synthesis of either ATP or GTP and thus represents the only step of substrate-level phosphorylation in the TCA. The beta subunit provides nucleotide specificity of the enzyme and binds the substrate succinate, while the binding sites for coenzyme A and phosphate are found in the alpha subunit. This Aeromonas hydrophila subsp. hydrophila (strain ATCC 7966 / DSM 30187 / BCRC 13018 / CCUG 14551 / JCM 1027 / KCTC 2358 / NCIMB 9240 / NCTC 8049) protein is Succinate--CoA ligase [ADP-forming] subunit beta.